Here is a 451-residue protein sequence, read N- to C-terminus: UDP-N-acetylmuramoylalanine--D-glutamate ligase (451 aa).

Residue Gly120–Thr126 participates in ATP binding.

The protein belongs to the MurCDEF family.

The protein localises to the cytoplasm. It carries out the reaction UDP-N-acetyl-alpha-D-muramoyl-L-alanine + D-glutamate + ATP = UDP-N-acetyl-alpha-D-muramoyl-L-alanyl-D-glutamate + ADP + phosphate + H(+). It functions in the pathway cell wall biogenesis; peptidoglycan biosynthesis. Cell wall formation. Catalyzes the addition of glutamate to the nucleotide precursor UDP-N-acetylmuramoyl-L-alanine (UMA). The sequence is that of UDP-N-acetylmuramoylalanine--D-glutamate ligase from Bacillus velezensis (strain DSM 23117 / BGSC 10A6 / LMG 26770 / FZB42) (Bacillus amyloliquefaciens subsp. plantarum).